We begin with the raw amino-acid sequence, 264 residues long: uncharacterized protein (264 aa).

A disordered region spans residues 57-264 (RPPASPCPPR…VYPHPHLTAT (208 aa)). Residues 140 to 153 (GKARRSPGRRRHPH) show a composition bias toward basic residues. The span at 154–165 (SSFPQASSPSSP) shows a compositional bias: low complexity.

This is an uncharacterized protein from Homo sapiens (Human).